The sequence spans 542 residues: Cytochrome P450 79B1 (542 aa).

A helical transmembrane segment spans residues phenylalanine 21–leucine 41. Position 478 (cysteine 478) interacts with heme.

The protein belongs to the cytochrome P450 family. Heme serves as cofactor.

The protein localises to the membrane. In terms of biological role, converts tyrosine to para-hydrophenylacetaldoxime in para-hydroxybenzylglucosinolate biosynthesis. In Sinapis alba (White mustard), this protein is Cytochrome P450 79B1 (CYP79B1).